A 154-amino-acid chain; its full sequence is 6,7-dimethyl-8-ribityllumazine synthase (154 aa).

Residues Phe-15, 47 to 49, and 71 to 73 contribute to the 5-amino-6-(D-ribitylamino)uracil site; these read TFD and AVI. Residue 76-77 coordinates (2S)-2-hydroxy-3-oxobutyl phosphate; it reads ET. Catalysis depends on His-79, which acts as the Proton donor. Residue Leu-104 coordinates 5-amino-6-(D-ribitylamino)uracil. Arg-119 serves as a coordination point for (2S)-2-hydroxy-3-oxobutyl phosphate.

Belongs to the DMRL synthase family.

The catalysed reaction is (2S)-2-hydroxy-3-oxobutyl phosphate + 5-amino-6-(D-ribitylamino)uracil = 6,7-dimethyl-8-(1-D-ribityl)lumazine + phosphate + 2 H2O + H(+). It functions in the pathway cofactor biosynthesis; riboflavin biosynthesis; riboflavin from 2-hydroxy-3-oxobutyl phosphate and 5-amino-6-(D-ribitylamino)uracil: step 1/2. Catalyzes the formation of 6,7-dimethyl-8-ribityllumazine by condensation of 5-amino-6-(D-ribitylamino)uracil with 3,4-dihydroxy-2-butanone 4-phosphate. This is the penultimate step in the biosynthesis of riboflavin. In Saccharolobus islandicus (strain L.S.2.15 / Lassen #1) (Sulfolobus islandicus), this protein is 6,7-dimethyl-8-ribityllumazine synthase.